A 293-amino-acid polypeptide reads, in one-letter code: N-acetylneuraminate lyase (293 aa).

Ser-47, Thr-48, and Tyr-136 together coordinate aceneuramate. Tyr-136 (proton donor) is an active-site residue. The Schiff-base intermediate with substrate role is filled by Lys-164. Aceneuramate contacts are provided by Thr-166, Gly-188, Asp-190, Glu-191, Ser-207, and Tyr-251.

This sequence belongs to the DapA family. NanA subfamily. Homotetramer.

The protein localises to the cytoplasm. The enzyme catalyses aceneuramate = aldehydo-N-acetyl-D-mannosamine + pyruvate. The protein operates within amino-sugar metabolism; N-acetylneuraminate degradation; D-fructose 6-phosphate from N-acetylneuraminate: step 1/5. Its function is as follows. Catalyzes the reversible aldol cleavage of N-acetylneuraminic acid (sialic acid; Neu5Ac) to form pyruvate and N-acetylmannosamine (ManNAc) via a Schiff base intermediate. This is N-acetylneuraminate lyase from Pasteurella multocida (strain Pm70).